The sequence spans 136 residues: Large ribosomal subunit protein uL16 (136 aa).

This sequence belongs to the universal ribosomal protein uL16 family. As to quaternary structure, part of the 50S ribosomal subunit.

Its function is as follows. Binds 23S rRNA and is also seen to make contacts with the A and possibly P site tRNAs. The polypeptide is Large ribosomal subunit protein uL16 (Erwinia tasmaniensis (strain DSM 17950 / CFBP 7177 / CIP 109463 / NCPPB 4357 / Et1/99)).